Here is a 550-residue protein sequence, read N- to C-terminus: Aspartate--tRNA ligase (550 aa).

Residue Glu-162 coordinates L-aspartate. Residues 186 to 189 (QIYK) form an aspartate region. Arg-208 provides a ligand contact to L-aspartate. ATP is bound by residues 208–210 (RDE) and Gln-217. His-417 is a binding site for L-aspartate. Glu-451 lines the ATP pocket. Arg-458 is a binding site for L-aspartate. 499 to 502 (GIDR) serves as a coordination point for ATP.

It belongs to the class-II aminoacyl-tRNA synthetase family. Type 1 subfamily. As to quaternary structure, homodimer.

It is found in the cytoplasm. It carries out the reaction tRNA(Asp) + L-aspartate + ATP = L-aspartyl-tRNA(Asp) + AMP + diphosphate. Its function is as follows. Catalyzes the attachment of L-aspartate to tRNA(Asp) in a two-step reaction: L-aspartate is first activated by ATP to form Asp-AMP and then transferred to the acceptor end of tRNA(Asp). The chain is Aspartate--tRNA ligase from Mycoplasma genitalium (strain ATCC 33530 / DSM 19775 / NCTC 10195 / G37) (Mycoplasmoides genitalium).